We begin with the raw amino-acid sequence, 798 residues long: Elongation factor G, mitochondrial (798 aa).

The N-terminal 24 residues, 1 to 24 (MRVIRAAAALNSSCAASSRQGARY), are a transit peptide targeting the mitochondrion. The tr-type G domain occupies 97 to 383 (SMVRNIGIAA…AVCDYLPNPG (287 aa)). GTP contacts are provided by residues 106–113 (AHIDSGKT), 181–185 (DTPGH), and 235–238 (NKMD).

It belongs to the TRAFAC class translation factor GTPase superfamily. Classic translation factor GTPase family. EF-G/EF-2 subfamily.

It is found in the mitochondrion. Its pathway is protein biosynthesis; polypeptide chain elongation. Functionally, mitochondrial GTPase that catalyzes the GTP-dependent ribosomal translocation step during translation elongation. During this step, the ribosome changes from the pre-translocational (PRE) to the post-translocational (POST) state as the newly formed A-site-bound peptidyl-tRNA and P-site-bound deacylated tRNA move to the P and E sites, respectively. Catalyzes the coordinated movement of the two tRNA molecules, the mRNA and conformational changes in the ribosome. The chain is Elongation factor G, mitochondrial from Chaetomium globosum (strain ATCC 6205 / CBS 148.51 / DSM 1962 / NBRC 6347 / NRRL 1970) (Soil fungus).